Reading from the N-terminus, the 289-residue chain is Bis(5'-nucleosyl)-tetraphosphatase, symmetrical (289 aa).

The protein belongs to the Ap4A hydrolase family.

It catalyses the reaction P(1),P(4)-bis(5'-adenosyl) tetraphosphate + H2O = 2 ADP + 2 H(+). Hydrolyzes diadenosine 5',5'''-P1,P4-tetraphosphate to yield ADP. The chain is Bis(5'-nucleosyl)-tetraphosphatase, symmetrical from Yersinia pseudotuberculosis serotype O:1b (strain IP 31758).